Reading from the N-terminus, the 521-residue chain is Exoglucanase 1 (521 aa).

The signal sequence occupies residues 1 to 17 (MLAKFAALAALVASANA). Residues 18-450 (QAVCSLTAET…FGPIGSTFSG (433 aa)) form a catalytic region. The N-linked (GlcNAc...) asparagine glycan is linked to N32. Residue E229 is the Nucleophile of the active site. E234 (proton donor) is an active-site residue. N287 is a glycosylation site (N-linked (GlcNAc...) asparagine). Residues 447-486 (TFSGGSSGTPPSNPSSSVKPVTSTAKPSSTSTASNPSGTG) are disordered. Residues 451-485 (GSSGTPPSNPSSSVKPVTSTAKPSSTSTASNPSGT) form a linker region. Residues 485–521 (TGAAHWAQCGGIGFSGPTTCQSPYTCQKINDYYSQCV) form the CBM1 domain. 2 disulfides stabilise this stretch: C493–C510 and C504–C520.

The protein belongs to the glycosyl hydrolase 7 (cellulase C) family.

It is found in the secreted. The enzyme catalyses Hydrolysis of (1-&gt;4)-beta-D-glucosidic linkages in cellulose and cellotetraose, releasing cellobiose from the non-reducing ends of the chains.. The protein is Exoglucanase 1 (cbh-1) of Neurospora crassa (strain ATCC 24698 / 74-OR23-1A / CBS 708.71 / DSM 1257 / FGSC 987).